We begin with the raw amino-acid sequence, 239 residues long: Probable 2-phosphosulfolactate phosphatase (239 aa).

The protein belongs to the ComB family. Mg(2+) serves as cofactor.

The catalysed reaction is (2R)-O-phospho-3-sulfolactate + H2O = (2R)-3-sulfolactate + phosphate. This is Probable 2-phosphosulfolactate phosphatase from Clostridium botulinum (strain Loch Maree / Type A3).